The following is a 434-amino-acid chain: Methylenetetrahydrofolate--tRNA-(uracil-5-)-methyltransferase TrmFO (434 aa).

10–15 (GAGLAG) is an FAD binding site.

The protein belongs to the MnmG family. TrmFO subfamily. FAD serves as cofactor.

The protein resides in the cytoplasm. The catalysed reaction is uridine(54) in tRNA + (6R)-5,10-methylene-5,6,7,8-tetrahydrofolate + NADH + H(+) = 5-methyluridine(54) in tRNA + (6S)-5,6,7,8-tetrahydrofolate + NAD(+). The enzyme catalyses uridine(54) in tRNA + (6R)-5,10-methylene-5,6,7,8-tetrahydrofolate + NADPH + H(+) = 5-methyluridine(54) in tRNA + (6S)-5,6,7,8-tetrahydrofolate + NADP(+). Catalyzes the folate-dependent formation of 5-methyl-uridine at position 54 (M-5-U54) in all tRNAs. In Bacillus cereus (strain Q1), this protein is Methylenetetrahydrofolate--tRNA-(uracil-5-)-methyltransferase TrmFO.